Reading from the N-terminus, the 548-residue chain is NAD(P)H-quinone oxidoreductase chain 4 (548 aa).

The next 14 helical transmembrane spans lie at 17–37 (VPWL…IPFI), 48–68 (WYAL…YLTG), 103–123 (LILL…PVTF), 127–147 (LFFF…AVQD), 149–169 (LLFF…LAIW), 181–201 (FILY…AMGF), 222–242 (GFQL…LPIV), 256–276 (TAPV…YALL), 290–310 (FAPL…LTSF), 327–347 (MGFV…GAML), 348–368 (QMIS…ATYD), 389–409 (FALW…SGFV), 430–450 (VVIC…LLSM), and 477–497 (VYII…PRLM).

Belongs to the complex I subunit 4 family.

The protein localises to the cellular thylakoid membrane. It catalyses the reaction a plastoquinone + NADH + (n+1) H(+)(in) = a plastoquinol + NAD(+) + n H(+)(out). The catalysed reaction is a plastoquinone + NADPH + (n+1) H(+)(in) = a plastoquinol + NADP(+) + n H(+)(out). NDH-1 shuttles electrons from NAD(P)H, via FMN and iron-sulfur (Fe-S) centers, to quinones in the respiratory chain. The immediate electron acceptor for the enzyme in this species is believed to be plastoquinone. Couples the redox reaction to proton translocation (for every two electrons transferred, four hydrogen ions are translocated across the cytoplasmic membrane), and thus conserves the redox energy in a proton gradient. This chain is NAD(P)H-quinone oxidoreductase chain 4, found in Synechococcus sp. (strain CC9902).